Reading from the N-terminus, the 220-residue chain is Large ribosomal subunit protein uL1 (220 aa).

The protein belongs to the universal ribosomal protein uL1 family. In terms of assembly, part of the 50S ribosomal subunit.

Binds directly to 23S rRNA. The L1 stalk is quite mobile in the ribosome, and is involved in E site tRNA release. In terms of biological role, protein L1 is also a translational repressor protein, it controls the translation of the L11 operon by binding to its mRNA. In Ehrlichia ruminantium (strain Gardel), this protein is Large ribosomal subunit protein uL1.